A 371-amino-acid polypeptide reads, in one-letter code: MLGSRAAGFARGLRAVALAWLPGWRGRSFALARAAGAPHGGDLQPPACPEPRGRQLSLSAAAVVDSAPRPLQPYLRLMRLDKPIGTWLLYLPCTWSIGLAAEPGCFPDWYMLSLFGTGAILMRGAGCTINDMWDQDYDKKVTRTANRPIAAGDISTFQSFVFLGGQLTLALGVLLCLNYYSIALGAGSLLLVITYPLMKRISYWPQLALGLTFNWGALLGWSAIKGSCDPSVCLPLYFSGVMWTLIYDTIYAHQDKRDDVLIGLKSTALRFGENTKPWLSGFSVAMLGALSLVGVNSGQTAPYYAALGAVGAHLTHQIYTLDIHRPEDCWNKFISNRTLGLIVFLGIVLGNLWKEKKTDKTKKGIENKIEN.

Residues 1 to 34 (MLGSRAAGFARGLRAVALAWLPGWRGRSFALARA) constitute a mitochondrion transit peptide. The Mitochondrial matrix segment spans residues 35 to 83 (AGAPHGGDLQPPACPEPRGRQLSLSAAAVVDSAPRPLQPYLRLMRLDKP). Residues 84–104 (IGTWLLYLPCTWSIGLAAEPG) form a helical membrane-spanning segment. Residues 105–108 (CFPD) are Mitochondrial intermembrane-facing. The chain crosses the membrane as a helical span at residues 109-129 (WYMLSLFGTGAILMRGAGCTI). Residues 130 to 148 (NDMWDQDYDKKVTRTANRP) lie on the Mitochondrial matrix side of the membrane. A helical transmembrane segment spans residues 149-169 (IAAGDISTFQSFVFLGGQLTL). Topologically, residues 170-172 (ALG) are mitochondrial intermembrane. Residues 173 to 193 (VLLCLNYYSIALGAGSLLLVI) traverse the membrane as a helical segment. Topologically, residues 194–203 (TYPLMKRISY) are mitochondrial matrix. The helical transmembrane segment at 204-224 (WPQLALGLTFNWGALLGWSAI) threads the bilayer. Over 225–231 (KGSCDPS) the chain is Mitochondrial intermembrane. The helical transmembrane segment at 232–252 (VCLPLYFSGVMWTLIYDTIYA) threads the bilayer. Topologically, residues 253–277 (HQDKRDDVLIGLKSTALRFGENTKP) are mitochondrial matrix. The helical transmembrane segment at 278 to 298 (WLSGFSVAMLGALSLVGVNSG) threads the bilayer. The Mitochondrial intermembrane portion of the chain corresponds to 299–300 (QT). A helical transmembrane segment spans residues 301–321 (APYYAALGAVGAHLTHQIYTL). The Mitochondrial matrix segment spans residues 322 to 332 (DIHRPEDCWNK). Residues 333–353 (FISNRTLGLIVFLGIVLGNLW) form a helical membrane-spanning segment. Residues 354 to 371 (KEKKTDKTKKGIENKIEN) lie on the Mitochondrial intermembrane side of the membrane.

This sequence belongs to the UbiA prenyltransferase family. Requires Mg(2+) as cofactor. In terms of tissue distribution, widely expressed. Present in all of the tissues tested. Expressed at higher level in skeletal muscle, adrenal glands and the heart.

The protein localises to the mitochondrion inner membrane. The enzyme catalyses an all-trans-polyprenyl diphosphate + 4-hydroxybenzoate = a 4-hydroxy-3-(all-trans-polyprenyl)benzoate + diphosphate. It catalyses the reaction all-trans-decaprenyl diphosphate + 4-hydroxybenzoate = 4-hydroxy-3-(all-trans-decaprenyl)benzoate + diphosphate. The catalysed reaction is all-trans-nonaprenyl diphosphate + 4-hydroxybenzoate = 4-hydroxy-3-(all-trans-nonaprenyl)benzoate + diphosphate. The protein operates within cofactor biosynthesis; ubiquinone biosynthesis. Its function is as follows. Mediates the second step in the final reaction sequence of coenzyme Q (CoQ) biosynthesis. Catalyzes the prenylation of para-hydroxybenzoate (PHB) with an all-trans polyprenyl donor (such as all-trans-decaprenyl diphosphate). The length of the polyprenyl side chain varies depending on the species, in humans, the side chain is comprised of 10 isoprenyls (decaprenyl) producing CoQ10 (also known as ubiquinone), whereas rodents predominantly generate CoQ9. However, this specificity is not complete, human tissues have low amounts of CoQ9 and rodent organs contain some CoQ10. Plays a central role in the biosynthesis of CoQ10. CoQ10 is a vital molecule that transports electrons from mitochondrial respiratory chain complexes. CoQs also function as cofactors for uncoupling protein and play a role as regulators of the extracellularly-induced ceramide-dependent apoptotic pathway. Regulates mitochondrial permeability transition pore (mPTP) opening and ROS production (pivotal events in cell death) in a tissue specific manner. The sequence is that of 4-hydroxybenzoate polyprenyltransferase, mitochondrial from Homo sapiens (Human).